The chain runs to 421 residues: Glucose-1-phosphate adenylyltransferase (421 aa).

Alpha-D-glucose 1-phosphate-binding positions include Tyr108, Gly173, 188 to 189 (EK), and Ser206.

This sequence belongs to the bacterial/plant glucose-1-phosphate adenylyltransferase family. Homotetramer.

The catalysed reaction is alpha-D-glucose 1-phosphate + ATP + H(+) = ADP-alpha-D-glucose + diphosphate. It functions in the pathway glycan biosynthesis; glycogen biosynthesis. In terms of biological role, involved in the biosynthesis of ADP-glucose, a building block required for the elongation reactions to produce glycogen. Catalyzes the reaction between ATP and alpha-D-glucose 1-phosphate (G1P) to produce pyrophosphate and ADP-Glc. The sequence is that of Glucose-1-phosphate adenylyltransferase from Mesorhizobium japonicum (strain LMG 29417 / CECT 9101 / MAFF 303099) (Mesorhizobium loti (strain MAFF 303099)).